A 1035-amino-acid chain; its full sequence is Ephrin type-A receptor 6 (1035 aa).

The signal sequence occupies residues 1-22 (MGGCEVREFLLQFGFFLPLLTA). Over 23–549 (WTGDCSHVSN…MAAEQGQILV (527 aa)) the chain is Extracellular. The Eph LBD domain maps to 33–211 (QVVLLDTSTV…FYKKCPFTVR (179 aa)). Fibronectin type-III domains are found at residues 330–440 (PPSA…TDQD) and 441–536 (APSL…TGDE). Residues Asn342, Asn396, and Asn409 are each glycosylated (N-linked (GlcNAc...) asparagine). The chain crosses the membrane as a helical span at residues 550 to 570 (IATAAVGGFTLLVILTLFFLI). Topologically, residues 571 to 1035 (TGRCQWYIKA…MHIQEKGFHV (465 aa)) are cytoplasmic. A phosphotyrosine; by autocatalysis mark is found at Tyr605 and Tyr611. Residues 630–943 (IRIERVIGAG…RNPSALHTLV (314 aa)) enclose the Protein kinase domain. ATP-binding positions include 636–644 (IGAGEFGEV) and Lys662. The Proton acceptor role is filled by Asp797. 2 positions are modified to phosphotyrosine; by autocatalysis: Tyr830 and Tyr977. The 65-residue stretch at 960–1024 (PLFVTVGDWL…VSSIQTLRLH (65 aa)) folds into the SAM domain. A PDZ-binding motif is present at residues 1033–1035 (FHV).

Belongs to the protein kinase superfamily. Tyr protein kinase family. Ephrin receptor subfamily. In terms of assembly, heterotetramer upon binding of the ligand. The heterotetramer is composed of an ephrin dimer and a receptor dimer. Oligomerization is probably required to induce biological responses. Interacts (via SAM domain) with ANKS1A (via SAM domain). As to expression, brain.

The protein localises to the membrane. The enzyme catalyses L-tyrosyl-[protein] + ATP = O-phospho-L-tyrosyl-[protein] + ADP + H(+). Receptor tyrosine kinase which binds promiscuously GPI-anchored ephrin-A family ligands residing on adjacent cells, leading to contact-dependent bidirectional signaling into neighboring cells. The signaling pathway downstream of the receptor is referred to as forward signaling while the signaling pathway downstream of the ephrin ligand is referred to as reverse signaling. This chain is Ephrin type-A receptor 6 (Epha6), found in Rattus norvegicus (Rat).